The sequence spans 164 residues: Low molecular weight phosphotyrosine protein phosphatase 2 (164 aa).

Cys-14 (nucleophile) is an active-site residue. Residue Arg-20 is part of the active site. Asp-130 acts as the Proton donor in catalysis.

It belongs to the low molecular weight phosphotyrosine protein phosphatase family. As to expression, cone cells and primary pigment cells in developing pupal retina.

It localises to the cytoplasm. It catalyses the reaction O-phospho-L-tyrosyl-[protein] + H2O = L-tyrosyl-[protein] + phosphate. The enzyme catalyses a phosphate monoester + H2O = an alcohol + phosphate. Functionally, catalyzes the dephosphorylation of tyrosine phosphorylated proteins and low-MW aryl phosphates. Can contribute to the regulation of a variety of developmental processes. The protein is Low molecular weight phosphotyrosine protein phosphatase 2 (primo-2) of Drosophila melanogaster (Fruit fly).